The chain runs to 151 residues: Large ribosomal subunit protein uL15 (151 aa).

The disordered stretch occupies residues 1-60 (MAENNPLKIHNLRPAPGAKTAKTRVGRGEASKGKTAGRGTKGTKARYQVPERFEGGQMPL).

The protein belongs to the universal ribosomal protein uL15 family. In terms of assembly, part of the 50S ribosomal subunit.

In terms of biological role, binds to the 23S rRNA. This is Large ribosomal subunit protein uL15 from Streptomyces avermitilis (strain ATCC 31267 / DSM 46492 / JCM 5070 / NBRC 14893 / NCIMB 12804 / NRRL 8165 / MA-4680).